Here is a 185-residue protein sequence, read N- to C-terminus: Cuticle protein 18.6, isoform B (185 aa).

6 consecutive repeat copies span residues 21–24 (AAPA), 33–36 (AAPV), 41–44 (AAPV), 133–136 (AAPV), 139–142 (AAPV), and 150–153 (AAPV). Positions 64–134 (HPQYSFAYNV…KEAGAHPAAA (71 aa)) constitute a Chitin-binding type R&amp;R domain.

Functionally, component of the cuticle of migratory locust which contains more than 100 different structural proteins. The protein is Cuticle protein 18.6, isoform B of Locusta migratoria (Migratory locust).